A 439-amino-acid polypeptide reads, in one-letter code: Apolipoprotein N-acyltransferase (439 aa).

Helical transmembrane passes span 13-33 (LLAG…FLVF), 47-67 (LFSF…IPLI), 75-95 (FIAY…QFGL), 97-117 (YLLW…YTLV), 149-169 (NAGT…FPLF), and 175-195 (IFSL…ETSY). Positions 207 to 439 (IQPFVPQDVK…GSRGILLFSF (233 aa)) constitute a CN hydrolase domain. E248 functions as the Proton acceptor in the catalytic mechanism. K305 is an active-site residue. The active-site Nucleophile is C355.

The protein belongs to the CN hydrolase family. Apolipoprotein N-acyltransferase subfamily.

Its subcellular location is the cell inner membrane. The enzyme catalyses N-terminal S-1,2-diacyl-sn-glyceryl-L-cysteinyl-[lipoprotein] + a glycerophospholipid = N-acyl-S-1,2-diacyl-sn-glyceryl-L-cysteinyl-[lipoprotein] + a 2-acyl-sn-glycero-3-phospholipid + H(+). It participates in protein modification; lipoprotein biosynthesis (N-acyl transfer). Catalyzes the phospholipid dependent N-acylation of the N-terminal cysteine of apolipoprotein, the last step in lipoprotein maturation. This chain is Apolipoprotein N-acyltransferase, found in Aquifex aeolicus (strain VF5).